The following is a 705-amino-acid chain: Dynein axonemal intermediate chain 1 (705 aa).

Disordered regions lie at residues 1-44 (MPSK…AVRP) and 122-169 (AGSQ…DVPA). S124 and S127 each carry phosphoserine. Over residues 124–135 (SQESVKVVTSDT) the composition is skewed to polar residues. Residues 136-159 (EILEEEEEPKEGEGEGEGEAEGEA) are compositionally biased toward acidic residues. WD repeat units follow at residues 386–426 (SSES…SQPC), 435–478 (KHTD…LVHI), 543–583 (AHNM…PMFI), 585–625 (DLNA…YEAI), and 633–672 (KKKNKITHVQFNPIHPIIIVGDDRGHITCLKLSPNLRKMP).

Belongs to the dynein intermediate chain family. In terms of assembly, consists of at least two heavy chains and a number of intermediate and light chains. Interacts with BICD2. Interacts with CFAP45 and CFAP52. Interacts with CFAP53.

It is found in the cytoplasm. The protein localises to the cytoskeleton. It localises to the cilium axoneme. Part of the dynein complex of respiratory cilia. The protein is Dynein axonemal intermediate chain 1 (Dnai1) of Rattus norvegicus (Rat).